The primary structure comprises 425 residues: Probable aminotransferase tcpI (425 aa).

K256 is modified (N6-(pyridoxal phosphate)lysine).

This sequence belongs to the class-I pyridoxal-phosphate-dependent aminotransferase family. Pyridoxal 5'-phosphate is required as a cofactor.

It functions in the pathway secondary metabolite biosynthesis. Probable aminotransferase; part of the gene cluster that mediates the biosynthesis of an unusual class of epipolythiodioxopiperazines (ETPs) lacking the reactive thiol group important for toxicity. Firstly, L-tyrosine is prenylated by tcpD, before undergoing condensation with L-glycine in a reaction catalyzed by the NRPS tcpP leading to the diketopiperazine (DKP) backbone. Afterwards the alpha-carbon of tyrosine is oxidized by the cytochrome P450 tcpC to form a hydroxyl group. However, in contrast other ETP biosynthesis pathways studied so far, tcpC is not able to bishydroxylate the DKP at both alpha-carbon positions, but hydroxylates the alpha-carbon of the tyrosine part and the nitrogen of the glycine part. The next steps involve an alpha,beta-elimination reaction catalyzed by tcpI, a methylation by the methyltransferase tcpN the action of the four enzyme cascade tcpG/K/J/I. Due to a dysfunctional cytochrome P450 monooxygenase tcpC, the pathway leads to the biosynthesis of probable non-toxic metabolites lacking the reactive thiol group. The polypeptide is Probable aminotransferase tcpI (Claviceps purpurea (strain 20.1) (Ergot fungus)).